The primary structure comprises 205 residues: Adenylyl-sulfate kinase (205 aa).

An ATP-binding site is contributed by 39 to 46 (GLSGAGKS). The Phosphoserine intermediate role is filled by serine 113.

It belongs to the APS kinase family.

It catalyses the reaction adenosine 5'-phosphosulfate + ATP = 3'-phosphoadenylyl sulfate + ADP + H(+). It functions in the pathway sulfur metabolism; hydrogen sulfide biosynthesis; sulfite from sulfate: step 2/3. Its function is as follows. Catalyzes the synthesis of activated sulfate. This is Adenylyl-sulfate kinase from Vibrio parahaemolyticus serotype O3:K6 (strain RIMD 2210633).